The chain runs to 885 residues: Cadherin-related family member 3 (885 aa).

The first 19 residues, 1 to 19 (MQEAIILLALLGAMSGGEA), serve as a signal peptide directing secretion. The Extracellular portion of the chain corresponds to 20-713 (LHLILLPATG…VYSPSAWYVP (694 aa)). Cadherin domains follow at residues 23-132 (ILLP…PPQF), 136-236 (LAEG…VPRF), 237-344 (TSPT…NPAT), 346-466 (QKFT…RPSY), 462-566 (DRPS…KPIC), and 567-695 (TPNS…RPRV). 2 N-linked (GlcNAc...) asparagine glycosylation sites follow: Asn186 and Asn257. N-linked (GlcNAc...) asparagine glycosylation is present at Asn624. Residues 714–734 (FVITLGSILLLGLLVYLVVLL) form a helical membrane-spanning segment. The Cytoplasmic portion of the chain corresponds to 735–885 (AKAIHRHCPC…RAYPKPHPGK (151 aa)). The tract at residues 808 to 885 (MPKWKESSHQ…RAYPKPHPGK (78 aa)) is disordered.

In terms of assembly, (Microbial infection) Interacts (via N-terminus) with human rhinovirus C capsid proteins VP1, VP2 and VP3. In terms of tissue distribution, expressed in bronchial epithelium from adults and in fetal lung tissue.

The protein localises to the cell membrane. Functionally, cadherins are calcium-dependent cell adhesion proteins. They preferentially interact with themselves in a homophilic manner in connecting cells; cadherins may thus contribute to the sorting of heterogeneous cell types. In terms of biological role, (Microbial infection) Acts as a receptor for human rhinovirus C. This Homo sapiens (Human) protein is Cadherin-related family member 3 (CDHR3).